Here is a 451-residue protein sequence, read N- to C-terminus: Phosphoglucosamine mutase (451 aa).

The active-site Phosphoserine intermediate is serine 102. 4 residues coordinate Mg(2+): serine 102, aspartate 243, aspartate 245, and aspartate 247. Phosphoserine is present on serine 102.

This sequence belongs to the phosphohexose mutase family. The cofactor is Mg(2+). In terms of processing, activated by phosphorylation.

The enzyme catalyses alpha-D-glucosamine 1-phosphate = D-glucosamine 6-phosphate. In terms of biological role, catalyzes the conversion of glucosamine-6-phosphate to glucosamine-1-phosphate. The sequence is that of Phosphoglucosamine mutase from Sinorhizobium medicae (strain WSM419) (Ensifer medicae).